A 454-amino-acid polypeptide reads, in one-letter code: Chromosomal replication initiator protein DnaA (454 aa).

The domain I, interacts with DnaA modulators stretch occupies residues 1–76; that stretch reads MNKLKTDLNL…IGASFRILAK (76 aa). Residues 76 to 113 form a domain II region; the sequence is KNPKIIFAQESPGNGEKATGKKIKSLPREDKSSIFESK. The interval 114–330 is domain III, AAA+ region; it reads GLNTKFSFEN…GALNRLCAYA (217 aa). ATP contacts are provided by glycine 158, glycine 160, lysine 161, and threonine 162. The interval 331–454 is domain IV, binds dsDNA; sequence SIHKEGKITL…KITEQLTSSQ (124 aa).

It belongs to the DnaA family. As to quaternary structure, oligomerizes as a right-handed, spiral filament on DNA at oriC.

The protein resides in the cytoplasm. Its function is as follows. Plays an essential role in the initiation and regulation of chromosomal replication. ATP-DnaA binds to the origin of replication (oriC) to initiate formation of the DNA replication initiation complex once per cell cycle. Binds the DnaA box (a 9 base pair repeat at the origin) and separates the double-stranded (ds)DNA. Forms a right-handed helical filament on oriC DNA; dsDNA binds to the exterior of the filament while single-stranded (ss)DNA is stabiized in the filament's interior. The ATP-DnaA-oriC complex binds and stabilizes one strand of the AT-rich DNA unwinding element (DUE), permitting loading of DNA polymerase. After initiation quickly degrades to an ADP-DnaA complex that is not apt for DNA replication. Binds acidic phospholipids. This is Chromosomal replication initiator protein DnaA from Methylacidiphilum infernorum (isolate V4) (Methylokorus infernorum (strain V4)).